A 510-amino-acid chain; its full sequence is Hepatic triacylglycerol lipase (510 aa).

A signal peptide spans 1-21 (MGNPLQISIFLVFCIFIQSSA). An N-linked (GlcNAc...) asparagine glycan is attached at Asn-79. The active-site Nucleophile is Ser-169. Asp-195 serves as the catalytic Charge relay system. Residues 255-278 (CHFLELYKHIAEHGLNAITQTIKC) form an essential for determining substrate specificity region. His-280 acts as the Charge relay system in catalysis. The 135-residue stretch at 353–487 (YHYQFKIQFI…HPSQEKVFVN (135 aa)) folds into the PLAT domain. Asn-398 carries an N-linked (GlcNAc...) asparagine glycan.

It belongs to the AB hydrolase superfamily. Lipase family. In terms of assembly, homodimer.

The protein localises to the secreted. It carries out the reaction a triacylglycerol + H2O = a diacylglycerol + a fatty acid + H(+). The enzyme catalyses a 1-acyl-sn-glycero-3-phosphocholine + H2O = sn-glycerol 3-phosphocholine + a fatty acid + H(+). The catalysed reaction is a 1,2-diacyl-sn-glycero-3-phosphocholine + H2O = a 2-acyl-sn-glycero-3-phosphocholine + a fatty acid + H(+). It catalyses the reaction 1,2,3-tri-(9Z-octadecenoyl)-glycerol + H2O = di-(9Z)-octadecenoylglycerol + (9Z)-octadecenoate + H(+). It carries out the reaction 1,2-di-(9Z-octadecenoyl)-sn-glycero-3-phosphocholine + H2O = (9Z-octadecenoyl)-sn-glycero-3-phosphocholine + (9Z)-octadecenoate + H(+). The enzyme catalyses 1,2,3-tributanoylglycerol + H2O = dibutanoylglycerol + butanoate + H(+). The catalysed reaction is 1,2-dihexadecanoyl-sn-glycero-3-phosphocholine + H2O = hexadecanoyl-sn-glycero-3-phosphocholine + hexadecanoate + H(+). It catalyses the reaction 1,2-di-(9Z-octadecenoyl)-sn-glycerol + H2O = 2-(9Z-octadecenoyl)-glycerol + (9Z)-octadecenoate + H(+). It carries out the reaction 1,2,3-tri-(9Z-octadecenoyl)-glycerol + H2O = 2,3-di-(9Z)-octadecenoyl-sn-glycerol + (9Z)-octadecenoate + H(+). The enzyme catalyses 1-(9Z-octadecenoyl)-sn-glycero-3-phospho-L-serine + H2O = sn-glycero-3-phospho-L-serine + (9Z)-octadecenoate + H(+). The catalysed reaction is 1-hexadecanoyl-sn-glycero-3-phosphocholine + H2O = sn-glycerol 3-phosphocholine + hexadecanoate + H(+). It catalyses the reaction 1,3-di-(9Z-octadecenoyl)-glycerol + H2O = 3-(9Z-octadecenoyl)-sn-glycerol + (9Z)-octadecenoate + H(+). Catalyzes the hydrolysis of triglycerides and phospholipids present in circulating plasma lipoproteins, including chylomicrons, intermediate density lipoproteins (IDL), low density lipoproteins (LDL) of large size and high density lipoproteins (HDL), releasing free fatty acids (FFA) and smaller lipoprotein particles. Also exhibits lysophospholipase activity. Can hydrolyze both neutral lipid and phospholipid substrates but shows a greater binding affinity for neutral lipid substrates than phospholipid substrates. In native LDL, preferentially hydrolyzes the phosphatidylcholine species containing polyunsaturated fatty acids at sn-2 position. The protein is Hepatic triacylglycerol lipase (Lipc) of Mus musculus (Mouse).